Consider the following 157-residue polypeptide: Probable succinate transporter subunit YjjB (157 aa).

The next 4 membrane-spanning stretches (helical) occupy residues 8-28, 50-70, 87-107, and 129-149; these read FALA…AMVF, MILM…SMLV, VFTV…TAMI, and FLTA…PGLW.

Belongs to the ThrE exporter (TC 2.A.79) family. The transporter is composed of YjjB and YjjP.

It is found in the cell inner membrane. Functionally, involved in succinate export with YjjP. Both proteins are required for export. The sequence is that of Probable succinate transporter subunit YjjB from Escherichia coli (strain SE11).